The primary structure comprises 165 residues: Small ribosomal subunit protein uS5 (165 aa).

The 64-residue stretch at 10–73 folds into the S5 DRBM domain; the sequence is LKEKVVFINR…EDAKKNLVEV (64 aa).

Belongs to the universal ribosomal protein uS5 family. Part of the 30S ribosomal subunit. Contacts proteins S4 and S8.

Its function is as follows. With S4 and S12 plays an important role in translational accuracy. Functionally, located at the back of the 30S subunit body where it stabilizes the conformation of the head with respect to the body. The chain is Small ribosomal subunit protein uS5 from Clostridium acetobutylicum (strain ATCC 824 / DSM 792 / JCM 1419 / IAM 19013 / LMG 5710 / NBRC 13948 / NRRL B-527 / VKM B-1787 / 2291 / W).